The chain runs to 375 residues: CLIP domain-containing serine protease B14 (375 aa).

A signal peptide spans Met-1 to Gly-24. The 55-residue stretch at Pro-29 to Cys-83 folds into the Clip domain. 3 disulfides stabilise this stretch: Cys-30-Cys-82, Cys-40-Cys-71, and Cys-46-Cys-83. N-linked (GlcNAc...) asparagine glycosylation occurs at Asn-34. A Peptidase S1 domain is found at Ile-101–Phe-370. Asn-105 is a glycosylation site (N-linked (GlcNAc...) asparagine). Cysteines 131 and 147 form a disulfide. Catalysis depends on charge relay system residues His-146 and Asp-213. N-linked (GlcNAc...) asparagine glycosylation occurs at Asn-238. Cystine bridges form between Cys-289-Cys-307 and Cys-317-Cys-346. Ser-321 (charge relay system) is an active-site residue. Residue Asn-357 is glycosylated (N-linked (GlcNAc...) asparagine).

This sequence belongs to the peptidase S1 family. CLIP subfamily. In terms of processing, N-glycosylated. Proteolytically cleaved. In terms of tissue distribution, expressed by a subpopulation of hemocytes.

The protein localises to the secreted. In terms of biological role, serine protease. Plays a role in innate immunity against infections by parasite P.berghei and by Gram-negative bacteria such as E.coli. In response to P.berghei infection, contributes to the clearing of parasite ookinetes independent of melanization, an innate immune response which consists in the deposition of melanin pigments on invading pathogens and parasites. May play a role in non-septic wound healing. In Anopheles gambiae (African malaria mosquito), this protein is CLIP domain-containing serine protease B14.